Reading from the N-terminus, the 136-residue chain is Selenoprotein M (136 aa).

A signal peptide spans methionine 1–serine 19. Active-site nucleophile residues include cysteine 38 and selenocysteine 41. The cysteinyl-selenocysteine (Cys-Sec) cross-link spans cysteine 38–selenocysteine 41. A non-standard amino acid (selenocysteine) is located at residue selenocysteine 41. Residues serine 111–leucine 136 are disordered. The Prevents secretion from ER signature appears at lysine 133–leucine 136.

The protein belongs to the selenoprotein M/F family.

It is found in the endoplasmic reticulum. Its function is as follows. May function as a thiol-disulfide oxidoreductase that participates in disulfide bond formation. The protein is Selenoprotein M (selenom) of Xenopus laevis (African clawed frog).